The primary structure comprises 691 residues: TBC1 domain family member 15 (691 aa).

Ala-2 carries the N-acetylalanine modification. 5 positions are modified to phosphoserine: Ser-23, Ser-70, Ser-205, Pro-213, and Ser-274. The Rab-GAP TBC domain occupies 346-556 (GLSHALRKQA…RLWEVMWTEL (211 aa)). Ser-640 and Ser-675 each carry phosphoserine. Thr-689 carries the post-translational modification Phosphothreonine.

In terms of assembly, interacts with non-phosphorylated form of RAB8A; phosphorylation of RAB8A at 'Thr-72' disrupts this interaction. Interacts with ARMC12. As to expression, ubiquitous.

It localises to the cytoplasm. Functionally, acts as a GTPase activating protein for RAB7A. Does not act on RAB4, RAB5 or RAB6. The protein is TBC1 domain family member 15 (TBC1D15) of Homo sapiens (Human).